A 265-amino-acid chain; its full sequence is 5'-nucleotidase SurE (265 aa).

Residues aspartate 8, aspartate 9, serine 40, and asparagine 98 each coordinate a divalent metal cation.

It belongs to the SurE nucleotidase family. Requires a divalent metal cation as cofactor.

Its subcellular location is the cytoplasm. It catalyses the reaction a ribonucleoside 5'-phosphate + H2O = a ribonucleoside + phosphate. Its function is as follows. Nucleotidase that shows phosphatase activity on nucleoside 5'-monophosphates. The protein is 5'-nucleotidase SurE of Nostoc sp. (strain PCC 7120 / SAG 25.82 / UTEX 2576).